The chain runs to 252 residues: Nuclease C1 (252 aa).

H87 functions as the Proton acceptor in the catalytic mechanism. N119 contributes to the Mg(2+) binding site.

This sequence belongs to the DNA/RNA non-specific endonuclease family. Requires Mg(2+) as cofactor. Mn(2+) is required as a cofactor.

The protein resides in the secreted. In terms of biological role, this enzyme has both RNase and DNase activity. The protein is Nuclease C1 (NUC1CE) of Cunninghamella echinulata var. echinulata.